A 709-amino-acid chain; its full sequence is Polyribonucleotide nucleotidyltransferase (709 aa).

Mg(2+) contacts are provided by aspartate 490 and aspartate 496. In terms of domain architecture, KH spans 557–616 (PKVITMRVLPEKIPVIIGPSGKNIKKIIDETGVKIDLDQEGLVRIYAVDGESADKAKEMI). The S1 motif domain occupies 626 to 694 (GEVYMGKVTR…EMGRAKVSLK (69 aa)).

Belongs to the polyribonucleotide nucleotidyltransferase family. Mg(2+) is required as a cofactor.

It localises to the cytoplasm. The enzyme catalyses RNA(n+1) + phosphate = RNA(n) + a ribonucleoside 5'-diphosphate. In terms of biological role, involved in mRNA degradation. Catalyzes the phosphorolysis of single-stranded polyribonucleotides processively in the 3'- to 5'-direction. The polypeptide is Polyribonucleotide nucleotidyltransferase (Persephonella marina (strain DSM 14350 / EX-H1)).